The sequence spans 94 residues: Aspartyl/glutamyl-tRNA(Asn/Gln) amidotransferase subunit C (94 aa).

This sequence belongs to the GatC family. In terms of assembly, heterotrimer of A, B and C subunits.

The catalysed reaction is L-glutamyl-tRNA(Gln) + L-glutamine + ATP + H2O = L-glutaminyl-tRNA(Gln) + L-glutamate + ADP + phosphate + H(+). It catalyses the reaction L-aspartyl-tRNA(Asn) + L-glutamine + ATP + H2O = L-asparaginyl-tRNA(Asn) + L-glutamate + ADP + phosphate + 2 H(+). Functionally, allows the formation of correctly charged Asn-tRNA(Asn) or Gln-tRNA(Gln) through the transamidation of misacylated Asp-tRNA(Asn) or Glu-tRNA(Gln) in organisms which lack either or both of asparaginyl-tRNA or glutaminyl-tRNA synthetases. The reaction takes place in the presence of glutamine and ATP through an activated phospho-Asp-tRNA(Asn) or phospho-Glu-tRNA(Gln). This is Aspartyl/glutamyl-tRNA(Asn/Gln) amidotransferase subunit C from Solidesulfovibrio magneticus (strain ATCC 700980 / DSM 13731 / RS-1) (Desulfovibrio magneticus).